A 949-amino-acid chain; its full sequence is Protein translocase subunit SecA 1 (949 aa).

Residues glutamine 86, 104–108 (GEGKT), and aspartate 493 contribute to the ATP site. The interval 869 to 949 (VDGGARERAP…AKPPKSVKKR (81 aa)) is disordered. Positions 925–934 (SRRERREAAR) are enriched in basic and acidic residues.

It belongs to the SecA family. Monomer and homodimer. Part of the essential Sec protein translocation apparatus which comprises SecA, SecYEG and auxiliary proteins SecDF. Other proteins may also be involved.

The protein resides in the cell membrane. It is found in the cytoplasm. It carries out the reaction ATP + H2O + cellular proteinSide 1 = ADP + phosphate + cellular proteinSide 2.. In terms of biological role, part of the Sec protein translocase complex. Interacts with the SecYEG preprotein conducting channel. Has a central role in coupling the hydrolysis of ATP to the transfer of proteins into and across the cell membrane, serving as an ATP-driven molecular motor driving the stepwise translocation of polypeptide chains across the membrane. The sequence is that of Protein translocase subunit SecA 1 from Mycobacterium bovis (strain ATCC BAA-935 / AF2122/97).